Consider the following 466-residue polypeptide: Adenylosuccinate lyase (466 aa).

Residues 21–22 (RY), 97–99 (NHD), and 130–131 (TS) each bind substrate. Residue His180 is the Proton donor/acceptor of the active site. Gln259 is a binding site for substrate. The Proton donor/acceptor role is filled by Ser307. 3 residues coordinate substrate: Arg347, Ser352, and Arg356.

Belongs to the lyase 1 family. Adenylosuccinate lyase subfamily. In terms of assembly, homotetramer. Residues from neighboring subunits contribute catalytic and substrate-binding residues to each active site.

The enzyme catalyses N(6)-(1,2-dicarboxyethyl)-AMP = fumarate + AMP. It carries out the reaction (2S)-2-[5-amino-1-(5-phospho-beta-D-ribosyl)imidazole-4-carboxamido]succinate = 5-amino-1-(5-phospho-beta-D-ribosyl)imidazole-4-carboxamide + fumarate. The protein operates within purine metabolism; AMP biosynthesis via de novo pathway; AMP from IMP: step 2/2. It functions in the pathway purine metabolism; IMP biosynthesis via de novo pathway; 5-amino-1-(5-phospho-D-ribosyl)imidazole-4-carboxamide from 5-amino-1-(5-phospho-D-ribosyl)imidazole-4-carboxylate: step 2/2. The polypeptide is Adenylosuccinate lyase (purB) (Dictyostelium discoideum (Social amoeba)).